The following is an 85-amino-acid chain: Large ribosomal subunit protein bL27 (85 aa).

The tract at residues 1–22 is disordered; that stretch reads MAHKKAGGSTKNGRDSESKRLG.

It belongs to the bacterial ribosomal protein bL27 family.

The sequence is that of Large ribosomal subunit protein bL27 from Alteromonas mediterranea (strain DSM 17117 / CIP 110805 / LMG 28347 / Deep ecotype).